The chain runs to 330 residues: Ketol-acid reductoisomerase (NADP(+)) (330 aa).

The KARI N-terminal Rossmann domain occupies 2-181; sequence MEKYHETDAD…GATRAVVLET (180 aa). NADP(+) is bound by residues 25–28, Arg-48, Ser-52, and 82–85; these read YGSQ and DENQ. Residue His-107 is part of the active site. Residue Gly-133 participates in NADP(+) binding. In terms of domain architecture, KARI C-terminal knotted spans 182-327; that stretch reads TFREETETDL…SELRAMMPQF (146 aa). 4 residues coordinate Mg(2+): Asp-190, Glu-194, Glu-226, and Glu-230. Residue Ser-251 coordinates substrate.

The protein belongs to the ketol-acid reductoisomerase family. Requires Mg(2+) as cofactor.

It carries out the reaction (2R)-2,3-dihydroxy-3-methylbutanoate + NADP(+) = (2S)-2-acetolactate + NADPH + H(+). It catalyses the reaction (2R,3R)-2,3-dihydroxy-3-methylpentanoate + NADP(+) = (S)-2-ethyl-2-hydroxy-3-oxobutanoate + NADPH + H(+). It functions in the pathway amino-acid biosynthesis; L-isoleucine biosynthesis; L-isoleucine from 2-oxobutanoate: step 2/4. The protein operates within amino-acid biosynthesis; L-valine biosynthesis; L-valine from pyruvate: step 2/4. Functionally, involved in the biosynthesis of branched-chain amino acids (BCAA). Catalyzes an alkyl-migration followed by a ketol-acid reduction of (S)-2-acetolactate (S2AL) to yield (R)-2,3-dihydroxy-isovalerate. In the isomerase reaction, S2AL is rearranged via a Mg-dependent methyl migration to produce 3-hydroxy-3-methyl-2-ketobutyrate (HMKB). In the reductase reaction, this 2-ketoacid undergoes a metal-dependent reduction by NADPH to yield (R)-2,3-dihydroxy-isovalerate. The sequence is that of Ketol-acid reductoisomerase (NADP(+)) from Methanocorpusculum labreanum (strain ATCC 43576 / DSM 4855 / Z).